The primary structure comprises 529 residues: Probable bifunctional tRNA threonylcarbamoyladenosine biosynthesis protein (529 aa).

The interval 1–324 (MIVLGLEGTA…FRIDEVDAPW (324 aa)) is kae1. Fe cation-binding residues include histidine 107, histidine 111, and tyrosine 128. Residues 128 to 132 (YVSGG), aspartate 160, glycine 173, glutamate 177, and asparagine 257 contribute to the L-threonylcarbamoyladenylate site. Aspartate 285 is a binding site for Fe cation. The Protein kinase domain occupies 329-529 (SRKDYGKAGA…SAIRRRHRYV (201 aa)). Residues 335 to 342 (KAGAESRI) and lysine 355 each bind ATP. Aspartate 447 acts as the Proton acceptor; for kinase activity in catalysis.

This sequence in the N-terminal section; belongs to the KAE1 / TsaD family. The protein in the C-terminal section; belongs to the protein kinase superfamily. Tyr protein kinase family. BUD32 subfamily. Component of the KEOPS complex that consists of Kae1, Bud32, Cgi121 and Pcc1; the whole complex dimerizes. It depends on Fe(2+) as a cofactor.

The protein resides in the cytoplasm. It carries out the reaction L-seryl-[protein] + ATP = O-phospho-L-seryl-[protein] + ADP + H(+). It catalyses the reaction L-threonyl-[protein] + ATP = O-phospho-L-threonyl-[protein] + ADP + H(+). The catalysed reaction is L-threonylcarbamoyladenylate + adenosine(37) in tRNA = N(6)-L-threonylcarbamoyladenosine(37) in tRNA + AMP + H(+). Required for the formation of a threonylcarbamoyl group on adenosine at position 37 (t(6)A37) in tRNAs that read codons beginning with adenine. Is a component of the KEOPS complex that is probably involved in the transfer of the threonylcarbamoyl moiety of threonylcarbamoyl-AMP (TC-AMP) to the N6 group of A37. The Kae1 domain likely plays a direct catalytic role in this reaction. The Bud32 domain probably displays kinase activity that regulates Kae1 function. This Thermoplasma acidophilum (strain ATCC 25905 / DSM 1728 / JCM 9062 / NBRC 15155 / AMRC-C165) protein is Probable bifunctional tRNA threonylcarbamoyladenosine biosynthesis protein.